The following is a 452-amino-acid chain: Imidazoleglycerol-phosphate dehydratase (452 aa).

A unknown activity region spans residues Met-1 to Gly-233. The segment at Leu-234–Ala-452 is imidazoleglycerol-phosphate dehydratase.

The protein belongs to the imidazoleglycerol-phosphate dehydratase family.

It catalyses the reaction D-erythro-1-(imidazol-4-yl)glycerol 3-phosphate = 3-(imidazol-4-yl)-2-oxopropyl phosphate + H2O. The protein operates within amino-acid biosynthesis; L-histidine biosynthesis; L-histidine from 5-phospho-alpha-D-ribose 1-diphosphate: step 6/9. The protein is Imidazoleglycerol-phosphate dehydratase (HIS3) of Phytophthora nicotianae (Potato buckeye rot agent).